A 244-amino-acid chain; its full sequence is Small ribosomal subunit protein uS3 (244 aa).

In terms of domain architecture, KH type-2 spans 39–107; the sequence is VREMLRKKLA…PAHINVTEVR (69 aa). A disordered region spans residues 213–244; that stretch reads VGQEKQDDSPRNDRNDRGDRGDRPSRPAREAR. The span at 216–244 shows a compositional bias: basic and acidic residues; sequence EKQDDSPRNDRNDRGDRGDRPSRPAREAR.

It belongs to the universal ribosomal protein uS3 family. As to quaternary structure, part of the 30S ribosomal subunit. Forms a tight complex with proteins S10 and S14.

Its function is as follows. Binds the lower part of the 30S subunit head. Binds mRNA in the 70S ribosome, positioning it for translation. This is Small ribosomal subunit protein uS3 from Xanthomonas oryzae pv. oryzae (strain MAFF 311018).